A 1472-amino-acid polypeptide reads, in one-letter code: ABC transporter FGM5 (1472 aa).

11 consecutive transmembrane segments (helical) span residues 32-52, 67-87, 100-120, 163-183, 197-217, 271-291, 316-336, 386-406, 412-432, 493-513, and 534-554; these read IILGILPAAIFILLALTRVAT, FTKLAVIAATAALQLVLLILS, FAVANSALGFSQWIVTLALSF, YAGVFTATIGLKVITLLLELQ, SPEETSSLFNLGVYFWLIGIF, ALIVPLILPVVPRIAMIGFQY, GLIGAALIIYAGIAISDALFW, FHGLHDFWANIIEIGLGCFLL, LAFISPIVVILLCVAATTAIA, LLIMTATVAFVPSAMSPVVAF, and LLTNPLGAMFQSVPAVIAAFV. Residues 284–551 enclose the ABC transmembrane type-1 1 domain; it reads IAMIGFQYAQ…MFQSVPAVIA (268 aa). An ABC transporter 1 domain is found at 605 to 834; that stretch reads ISIVDGSFGW…GIYIPTLGLS (230 aa). ATP is bound at residue 638–645; sequence GPVASGKS. Residues Asn682, Asn696, Asn763, Asn784, and Asn843 are each glycosylated (N-linked (GlcNAc...) asparagine). The next 4 helical transmembrane spans lie at 900–920, 938–958, 1003–1023, and 1024–1044; these read LLSGIMYAVGRNFPSIWMGWW, LFRGLQIISLFLCATAVVIFM, GELPISLLNTVIQIFDVFAMA, and VVVAVGAPWLAIAYPVVFSII. The ABC transmembrane type-1 2 domain occupies 900–1139; that stretch reads LLSGIMYAVG…VGVVAISTQL (240 aa). An N-linked (GlcNAc...) asparagine glycan is attached at Asn1101. A helical transmembrane segment spans residues 1116 to 1136; that stretch reads FLATFLNLIVMVLAVGVVAIS. Residues 1218–1468 enclose the ABC transporter 2 domain; it reads YKNDDESPAS…EGSWFSQLWA (251 aa). Residue 1255 to 1262 coordinates ATP; that stretch reads GRTGSGKS. N-linked (GlcNAc...) asparagine glycans are attached at residues Asn1277 and Asn1293.

Belongs to the ABC transporter superfamily. ABCC family. Conjugate transporter (TC 3.A.1.208) subfamily.

It is found in the cell membrane. Its pathway is secondary metabolite biosynthesis. In terms of biological role, ABC transporter; part of the Fg3_54/C64 gene cluster that mediates the biosynthesis of the octapeptide fusaoctaxin A, a virulence factor that is required for cell-to-cell invasiveness of plant host. The 2 nonribosomal peptide synthetases NRPS9 and NRPS5 form an assembly line which likely utilizes GABA as a starter unit (loaded on the unique module M1 of NRPS9) and sequentially incorporates seven extender units composed of the residues L-Ala, L-allo-Ile, L-Ser, L-Val, L-Ser, L-Leu and L-Leu, respectively. During the process, each of the residues that are tethered on modules M3-M7 of NRPS5 containing an E domain can undergo an epimerization reaction to produce a D-configuration before the transpeptidation reaction occurs. The elongation of the peptidyl chain might be terminated by module M8-mediated L-Leu incorporation, followed by R domain-catalyzed 4 electron reduction to release the resulting octapeptide from the assembly line as an alcohol. Fusaoctaxin A is cleaved by the cluster specific ABC transporter FGM5 to the pentapeptide fusapentaxin A and the tripeptide fusatrixin A. The other enzymes from the cluster, FGM1, FGM2, FGM3 and FGM9 seem not to be involved in the biosynthesis of fusaoctaxin A and their functions have still to be determined. The protein is ABC transporter FGM5 of Gibberella zeae (strain ATCC MYA-4620 / CBS 123657 / FGSC 9075 / NRRL 31084 / PH-1) (Wheat head blight fungus).